A 438-amino-acid polypeptide reads, in one-letter code: Methyl-coenzyme M reductase subunit beta (438 aa).

Tyr-367 serves as a coordination point for coenzyme M. Gly-369 serves as a coordination point for coenzyme B.

The protein belongs to the methyl-coenzyme M reductase beta subunit family. In terms of assembly, MCR is a hexamer of two alpha, two beta, and two gamma chains, forming a dimer of heterotrimers. Requires coenzyme F430 as cofactor.

The protein localises to the cytoplasm. It catalyses the reaction coenzyme B + methyl-coenzyme M = methane + coenzyme M-coenzyme B heterodisulfide. Its pathway is one-carbon metabolism; methyl-coenzyme M reduction; methane from methyl-coenzyme M: step 1/1. In terms of biological role, component of the methyl-coenzyme M reductase (MCR) I that catalyzes the reductive cleavage of methyl-coenzyme M (CoM-S-CH3 or 2-(methylthio)ethanesulfonate) using coenzyme B (CoB or 7-mercaptoheptanoylthreonine phosphate) as reductant which results in the production of methane and the mixed heterodisulfide of CoB and CoM (CoM-S-S-CoB). This is the final step in methanogenesis. The polypeptide is Methyl-coenzyme M reductase subunit beta (mcrB) (Methanothermus fervidus).